The following is a 768-amino-acid chain: C-type polyheme cytochrome OmcC (768 aa).

A signal peptide spans 1 to 23; sequence MSRKVTKYSAVLAVSLFAAALAG. Cys24 is lipidated: N-palmitoyl cysteine. Cys24 carries the S-diacylglycerol cysteine lipid modification. 36 residues coordinate heme c: Cys48, Cys51, His52, Cys80, Cys83, His84, Cys112, Cys115, His116, Cys148, Cys151, His152, Cys193, Cys196, His197, Cys238, Cys241, His242, Cys320, Cys323, His324, Cys405, Cys408, His409, Cys454, Cys457, His458, Cys504, Cys507, His508, Cys579, Cys582, His583, Cys611, Cys614, and His615.

In terms of processing, binds 12 heme c groups per subunit.

It localises to the cell outer membrane. Its function is as follows. Not involved in Fe(3+) reduction. The polypeptide is C-type polyheme cytochrome OmcC (omcC) (Geobacter sulfurreducens (strain ATCC 51573 / DSM 12127 / PCA)).